The chain runs to 343 residues: Flap endonuclease 1 (343 aa).

The N-domain stretch occupies residues 1 to 98; that stretch reads MGVPIGELIP…KELEKRREAR (98 aa). Mg(2+) is bound by residues aspartate 27, aspartate 80, glutamate 152, glutamate 154, aspartate 173, aspartate 175, and aspartate 236. Positions 116-258 are I-domain; that stretch reads EARKYAQRAT…KALEIVKYSK (143 aa). The segment at 330–338 is interaction with PCNA; sequence KQSTLESWF.

Belongs to the XPG/RAD2 endonuclease family. FEN1 subfamily. As to quaternary structure, interacts with PCNA. PCNA stimulates the nuclease activity without altering cleavage specificity. Mg(2+) is required as a cofactor.

Functionally, structure-specific nuclease with 5'-flap endonuclease and 5'-3' exonuclease activities involved in DNA replication and repair. During DNA replication, cleaves the 5'-overhanging flap structure that is generated by displacement synthesis when DNA polymerase encounters the 5'-end of a downstream Okazaki fragment. Binds the unpaired 3'-DNA end and kinks the DNA to facilitate 5' cleavage specificity. Cleaves one nucleotide into the double-stranded DNA from the junction in flap DNA, leaving a nick for ligation. Also involved in the base excision repair (BER) pathway. Acts as a genome stabilization factor that prevents flaps from equilibrating into structures that lead to duplications and deletions. Also possesses 5'-3' exonuclease activity on nicked or gapped double-stranded DNA. This chain is Flap endonuclease 1, found in Pyrococcus abyssi (strain GE5 / Orsay).